The sequence spans 52 residues: Gastrin/cholecystokinin-like peptide (52 aa).

The protein belongs to the gastrin/cholecystokinin family.

It is found in the secreted. Its function is as follows. May control digestion processes. This chain is Gastrin/cholecystokinin-like peptide, found in Trachemys scripta (Red-eared slider turtle).